The primary structure comprises 159 residues: Ribosomal RNA large subunit methyltransferase H (159 aa).

Residues Leu76, Gly107, and Leu126 to Met131 contribute to the S-adenosyl-L-methionine site.

Belongs to the RNA methyltransferase RlmH family. In terms of assembly, homodimer.

The protein resides in the cytoplasm. The catalysed reaction is pseudouridine(1915) in 23S rRNA + S-adenosyl-L-methionine = N(3)-methylpseudouridine(1915) in 23S rRNA + S-adenosyl-L-homocysteine + H(+). Specifically methylates the pseudouridine at position 1915 (m3Psi1915) in 23S rRNA. This Acinetobacter baumannii (strain SDF) protein is Ribosomal RNA large subunit methyltransferase H.